The primary structure comprises 325 residues: ADP-ribose glycohydrolase MACROD1 (325 aa).

The disordered stretch occupies residues 21-55 (LGAPRPWPGPSPGATRTRSSACGPPASLSAHHPRA). N6-succinyllysine is present on residues Lys-96, Lys-103, and Lys-129. Lys-138 is covalently cross-linked (Glycyl lysine isopeptide (Lys-Gly) (interchain with G-Cter in SUMO2)). Positions 141 to 322 (EPKYKKDKQL…IYRERLPHYF (182 aa)) constitute a Macro domain. 159 to 161 (GDI) lines the substrate pocket. An N6-acetyllysine modification is found at Lys-163. Substrate contacts are provided by residues 172–174 (AAN), 179–184 (GGGGVD), 267–273 (ISTGVFG), and Phe-306.

It belongs to the MacroD-type family. MacroD1/2-like subfamily. Interacts with ESR1; Interacts in a manner that is estrogen independent but is enhanced by estrogen. Interacts (via macro domain) with AR.

Its subcellular location is the nucleus. It catalyses the reaction 3''-O-acetyl-ADP-D-ribose + H2O = ADP-D-ribose + acetate + H(+). The catalysed reaction is 2''-O-acetyl-ADP-D-ribose + H2O = ADP-D-ribose + acetate + H(+). It carries out the reaction 4-O-(ADP-D-ribosyl)-L-aspartyl-[protein] + H2O = L-aspartyl-[protein] + ADP-D-ribose + H(+). The enzyme catalyses 5-O-(ADP-D-ribosyl)-L-glutamyl-[protein] + H2O = L-glutamyl-[protein] + ADP-D-ribose + H(+). It catalyses the reaction alpha-NAD(+) + H2O = ADP-D-ribose + nicotinamide + H(+). Subject to competitive inhibition by the product ADP-ribose. Its function is as follows. Removes ADP-ribose from aspartate and glutamate residues in proteins bearing a single ADP-ribose moiety. Inactive towards proteins bearing poly-ADP-ribose. Deacetylates O-acetyl-ADP ribose, a signaling molecule generated by the deacetylation of acetylated lysine residues in histones and other proteins. Plays a role in estrogen signaling. Binds to androgen receptor (AR) and amplifies the transactivation function of AR in response to androgen. May play an important role in carcinogenesis and/or progression of hormone-dependent cancers by feed-forward mechanism that activates ESR1 transactivation. Could be an ESR1 coactivator, providing a positive feedback regulatory loop for ESR1 signal transduction. Could be involved in invasive growth by down-regulating CDH1 in endometrial cancer cells. Enhances ESR1-mediated transcription activity. The chain is ADP-ribose glycohydrolase MACROD1 (MACROD1) from Bos taurus (Bovine).